Reading from the N-terminus, the 218-residue chain is Pyridoxine/pyridoxamine 5'-phosphate oxidase (218 aa).

Substrate contacts are provided by residues 14–17 and K72; that span reads RREY. FMN contacts are provided by residues 67–72, 82–83, R88, K89, and Q111; these read RIVLLK and YT. Positions 129, 133, and 137 each coordinate substrate. Residues 146 to 147 and W191 contribute to the FMN site; that span reads QS. Substrate is bound at residue 197–199; that stretch reads RLH. R201 is an FMN binding site.

Belongs to the pyridoxamine 5'-phosphate oxidase family. As to quaternary structure, homodimer. FMN serves as cofactor.

It catalyses the reaction pyridoxamine 5'-phosphate + O2 + H2O = pyridoxal 5'-phosphate + H2O2 + NH4(+). It carries out the reaction pyridoxine 5'-phosphate + O2 = pyridoxal 5'-phosphate + H2O2. It participates in cofactor metabolism; pyridoxal 5'-phosphate salvage; pyridoxal 5'-phosphate from pyridoxamine 5'-phosphate: step 1/1. It functions in the pathway cofactor metabolism; pyridoxal 5'-phosphate salvage; pyridoxal 5'-phosphate from pyridoxine 5'-phosphate: step 1/1. Its function is as follows. Catalyzes the oxidation of either pyridoxine 5'-phosphate (PNP) or pyridoxamine 5'-phosphate (PMP) into pyridoxal 5'-phosphate (PLP). The polypeptide is Pyridoxine/pyridoxamine 5'-phosphate oxidase (Escherichia coli (strain 55989 / EAEC)).